A 278-amino-acid polypeptide reads, in one-letter code: MLVGAHESIAGGVANAVDRQLENGGNCGQIFTHSPQVWQDPSIDDTDAEAFRDRSQMHDIGPWVIHSSYLVNLCTPKDDLRAKSIDSMQQEVDAAAQLSIPYVNVHLGAHTGAGKQQGLDNAISALDELTIPDSVTVLLESDAGSGTKLGNKFDHLAYVLEESTHELEVCLDTAHVFAAGYDLSTPAAVNTTIKEFDTTVGVDNLACVHLNDSKHACGTNKDEHAHIGEGKIGESGMEAFINHSAIDPIPLVLETPNENGKGFAWNIDRVQNLAENPA.

Zn(2+) contacts are provided by His66, His106, Glu140, Asp172, His175, His209, Asp222, His224, and Glu254.

Belongs to the AP endonuclease 2 family. The cofactor is Zn(2+).

The enzyme catalyses Endonucleolytic cleavage to 5'-phosphooligonucleotide end-products.. Its function is as follows. Endonuclease IV plays a role in DNA repair. It cleaves phosphodiester bonds at apurinic or apyrimidinic (AP) sites, generating a 3'-hydroxyl group and a 5'-terminal sugar phosphate. This Haloquadratum walsbyi (strain DSM 16790 / HBSQ001) protein is Probable endonuclease 4.